The following is a 92-amino-acid chain: Small ribosomal subunit protein uS19 (92 aa).

Belongs to the universal ribosomal protein uS19 family.

In terms of biological role, protein S19 forms a complex with S13 that binds strongly to the 16S ribosomal RNA. This Yersinia pestis (strain Pestoides F) protein is Small ribosomal subunit protein uS19.